The primary structure comprises 314 residues: Mitochondrial MRF1 N(5)-glutamine methyltransferase MTQ1 (314 aa).

S-adenosyl-L-methionine contacts are provided by residues 118–122 (FTGTG), Asp141, and Asn188. Position 188 to 191 (188 to 191 (NPPY)) interacts with substrate.

The protein belongs to the protein N5-glutamine methyltransferase family.

The protein resides in the mitochondrion. The catalysed reaction is L-glutaminyl-[peptide chain release factor] + S-adenosyl-L-methionine = N(5)-methyl-L-glutaminyl-[peptide chain release factor] + S-adenosyl-L-homocysteine + H(+). In terms of biological role, methylates MRF1 on 'Gln-287' using S-adenosyl L-methionine as methyl donor. This chain is Mitochondrial MRF1 N(5)-glutamine methyltransferase MTQ1 (MTQ1), found in Saccharomyces cerevisiae (strain ATCC 204508 / S288c) (Baker's yeast).